The sequence spans 136 residues: Transcription antitermination protein NusB (136 aa).

It belongs to the NusB family.

Its function is as follows. Involved in transcription antitermination. Required for transcription of ribosomal RNA (rRNA) genes. Binds specifically to the boxA antiterminator sequence of the ribosomal RNA (rrn) operons. The protein is Transcription antitermination protein NusB of Pseudoalteromonas translucida (strain TAC 125).